A 196-amino-acid chain; its full sequence is ATP-dependent Clp protease proteolytic subunit (196 aa).

The active-site Nucleophile is serine 98. Histidine 123 is a catalytic residue.

Belongs to the peptidase S14 family. In terms of assembly, fourteen ClpP subunits assemble into 2 heptameric rings which stack back to back to give a disk-like structure with a central cavity, resembling the structure of eukaryotic proteasomes.

The protein localises to the cytoplasm. It catalyses the reaction Hydrolysis of proteins to small peptides in the presence of ATP and magnesium. alpha-casein is the usual test substrate. In the absence of ATP, only oligopeptides shorter than five residues are hydrolyzed (such as succinyl-Leu-Tyr-|-NHMec, and Leu-Tyr-Leu-|-Tyr-Trp, in which cleavage of the -Tyr-|-Leu- and -Tyr-|-Trp bonds also occurs).. Cleaves peptides in various proteins in a process that requires ATP hydrolysis. Has a chymotrypsin-like activity. Plays a major role in the degradation of misfolded proteins. The chain is ATP-dependent Clp protease proteolytic subunit from Geobacillus thermodenitrificans (strain NG80-2).